A 262-amino-acid polypeptide reads, in one-letter code: VPS74-like protein DDB_G0288371 (262 aa).

The protein belongs to the GOLPH3/VPS74 family.

It is found in the golgi apparatus. It localises to the golgi stack membrane. Functionally, phosphatidylinositol-4-phosphate-binding protein that links Golgi membranes to the cytoskeleton and may participate in the tensile force required for vesicle budding from the Golgi. Thereby, may play a role in Golgi membrane trafficking. May also bind to the coatomer to regulate Golgi membrane trafficking. May play a role in anterograde transport from the Golgi to the plasma membrane and regulate secretion. May be involved in vacuolar protein sorting. This Dictyostelium discoideum (Social amoeba) protein is VPS74-like protein DDB_G0288371.